The sequence spans 521 residues: 2-isopropylmalate synthase (521 aa).

One can recognise a Pyruvate carboxyltransferase domain in the interval 12–274 (VIIFDTTLRD…WNKIDTTMLT (263 aa)). Aspartate 21, histidine 209, histidine 211, and asparagine 245 together coordinate Mn(2+). The regulatory domain stretch occupies residues 398–521 (KLLSLTVIAG…DLPVPEAAAS (124 aa)).

The protein belongs to the alpha-IPM synthase/homocitrate synthase family. LeuA type 1 subfamily. In terms of assembly, homodimer. Mn(2+) is required as a cofactor.

It is found in the cytoplasm. It carries out the reaction 3-methyl-2-oxobutanoate + acetyl-CoA + H2O = (2S)-2-isopropylmalate + CoA + H(+). The protein operates within amino-acid biosynthesis; L-leucine biosynthesis; L-leucine from 3-methyl-2-oxobutanoate: step 1/4. Catalyzes the condensation of the acetyl group of acetyl-CoA with 3-methyl-2-oxobutanoate (2-ketoisovalerate) to form 3-carboxy-3-hydroxy-4-methylpentanoate (2-isopropylmalate). The polypeptide is 2-isopropylmalate synthase (Rhodopseudomonas palustris (strain BisB18)).